A 1778-amino-acid chain; its full sequence is Protein TIC 214 (1778 aa).

A run of 6 helical transmembrane segments spans residues 18-38, 67-87, 90-110, 132-152, 175-195, and 226-246; these read IINS…FSIG, FIAG…HLAL, PHTI…WNNN, VFLN…SSML, VGWL…LVWI, and IFSI…PSPI. The disordered stretch occupies residues 1498-1520; the sequence is GQGELESDNEKKRNPESALSNQE.

The protein belongs to the TIC214 family. As to quaternary structure, part of the Tic complex.

It localises to the plastid. Its subcellular location is the chloroplast inner membrane. In terms of biological role, involved in protein precursor import into chloroplasts. May be part of an intermediate translocation complex acting as a protein-conducting channel at the inner envelope. This is Protein TIC 214 from Arabis hirsuta (Hairy rock-cress).